The chain runs to 239 residues: MLTRKQQELLLFIHERMKESGVPPSFDEMKDALDLASKSGIHRLITALEERGFIRRLPNRARALEVIKLPEAYSPSIQPRRGFSPSVIEGSLGKPQPVATPAPAKSVADNGNSVSVPVMGRIAAGVPISAIQNNTHDIVVPADMLGSGEHYALEVKGDSMIDAGIFDGDTVIIRNGSTASPGDIVVALVDDEEATLKRFRRKGASIALEAANPAYETRIFGPDRVKVQGKLVGLIRRYH.

The H-T-H motif DNA-binding region spans 26-46 (FDEMKDALDLASKSGIHRLIT). A disordered region spans residues 84–107 (SPSVIEGSLGKPQPVATPAPAKSV). Catalysis depends on for autocatalytic cleavage activity residues serine 159 and lysine 197.

Belongs to the peptidase S24 family. In terms of assembly, homodimer.

It catalyses the reaction Hydrolysis of Ala-|-Gly bond in repressor LexA.. Functionally, represses a number of genes involved in the response to DNA damage (SOS response), including recA and lexA. In the presence of single-stranded DNA, RecA interacts with LexA causing an autocatalytic cleavage which disrupts the DNA-binding part of LexA, leading to derepression of the SOS regulon and eventually DNA repair. In Rhizobium johnstonii (strain DSM 114642 / LMG 32736 / 3841) (Rhizobium leguminosarum bv. viciae), this protein is LexA repressor.